The sequence spans 316 residues: Methionyl-tRNA formyltransferase (316 aa).

109–112 contacts (6S)-5,6,7,8-tetrahydrofolate; the sequence is SLLP.

The protein belongs to the Fmt family.

It carries out the reaction L-methionyl-tRNA(fMet) + (6R)-10-formyltetrahydrofolate = N-formyl-L-methionyl-tRNA(fMet) + (6S)-5,6,7,8-tetrahydrofolate + H(+). Attaches a formyl group to the free amino group of methionyl-tRNA(fMet). The formyl group appears to play a dual role in the initiator identity of N-formylmethionyl-tRNA by promoting its recognition by IF2 and preventing the misappropriation of this tRNA by the elongation apparatus. This chain is Methionyl-tRNA formyltransferase, found in Nitrosomonas eutropha (strain DSM 101675 / C91 / Nm57).